A 185-amino-acid chain; its full sequence is Ribose 1,5-bisphosphate phosphokinase PhnN (185 aa).

10–17 (GPSGSGKD) serves as a coordination point for ATP.

Belongs to the ribose 1,5-bisphosphokinase family.

It carries out the reaction alpha-D-ribose 1,5-bisphosphate + ATP = 5-phospho-alpha-D-ribose 1-diphosphate + ADP. The protein operates within metabolic intermediate biosynthesis; 5-phospho-alpha-D-ribose 1-diphosphate biosynthesis; 5-phospho-alpha-D-ribose 1-diphosphate from D-ribose 5-phosphate (route II): step 3/3. Its function is as follows. Catalyzes the phosphorylation of ribose 1,5-bisphosphate to 5-phospho-D-ribosyl alpha-1-diphosphate (PRPP). The chain is Ribose 1,5-bisphosphate phosphokinase PhnN from Escherichia coli O157:H7.